We begin with the raw amino-acid sequence, 356 residues long: Butyrate kinase (356 aa).

It belongs to the acetokinase family.

The protein localises to the cytoplasm. The enzyme catalyses butanoate + ATP = butanoyl phosphate + ADP. It functions in the pathway lipid metabolism; butanoate metabolism. Catalyzes the conversion of butyryl-CoA through butyryl phosphate to butyrate. In Clostridium tetani (strain Massachusetts / E88), this protein is Butyrate kinase.